Consider the following 449-residue polypeptide: MADHDIHIIGGGLAGSEAAWQLAEAGYHVRLSEMRGGGDMTPAHQGDGLAEMVCSNSFRSDDGDSNAVGLLHREMRALGSIIMREADATKVPAGSALAVDRDLFSGGVTRALSEHPNITIVRERIDKLPTEGLTIVATGPLTAASLAESIGAATGKDALAFFDAIAPIVYRDSIDMDIAWMASRWDRVGPIGDGRDYINCPLDKDQYYAFVQGLLDGEKTEFKDWEKDTPYFEGCMPIEVMAERGVETLRFGPMKGVGLDNPRTGRWPYAVVQLRQDNALGTLWNMVGFQTKLKHAEQVRLFRTIPGLEKAEFARLGGLHRNSFIRSPELLDRQLRLKSAPHIRFAGQITGCEGYVESAAIGLVAARFAAAELGGRALPPPPPETALGALLCHITGGADASSYQPMNVNFGLFPPLADDVRKKDRKLGYTQRAGKALAEWMTVAAGVAA.

10 to 15 serves as a coordination point for FAD; sequence GGGLAG.

It belongs to the MnmG family. TrmFO subfamily. The cofactor is FAD.

Its subcellular location is the cytoplasm. The enzyme catalyses uridine(54) in tRNA + (6R)-5,10-methylene-5,6,7,8-tetrahydrofolate + NADH + H(+) = 5-methyluridine(54) in tRNA + (6S)-5,6,7,8-tetrahydrofolate + NAD(+). It catalyses the reaction uridine(54) in tRNA + (6R)-5,10-methylene-5,6,7,8-tetrahydrofolate + NADPH + H(+) = 5-methyluridine(54) in tRNA + (6S)-5,6,7,8-tetrahydrofolate + NADP(+). Its function is as follows. Catalyzes the folate-dependent formation of 5-methyl-uridine at position 54 (M-5-U54) in all tRNAs. The polypeptide is Methylenetetrahydrofolate--tRNA-(uracil-5-)-methyltransferase TrmFO (Sphingopyxis alaskensis (strain DSM 13593 / LMG 18877 / RB2256) (Sphingomonas alaskensis)).